A 670-amino-acid chain; its full sequence is MSKVFKLHSEFKPAGDQPQAISKLEEGLEDGLAHQTLLGVTGSGKTFTVANVIADLNRPTMVLAPNKTLAAQLYGEMKEFFPENAVEYFVSYYDYYQPEAYVPSSDTFIEKDAAVNEHIEQMRLSATKALLERRDVIVVASVSAIYGLGDPDLYLKMMLHLTKGMIIDQRSILRRLAELQYARNDQAFQRATFRVRGEVIDVFPAESDELALRIELFDEEVERLSLFDPLTGQIEQVVQRFTIYPKSHYVTPRERILQAMEEIKVDLAERRKVLLANNKLLEEQRLTQRTQFDLEMMKELGYCSGIENYSRYLSGRKEGEPPPTLFDYLPADGLLVVDESHVTIPQIGAMYKGDRSRKETLVEYGFRLPSALDNRPMRFEEFEALAPQTIYVSATPGKYELEKSGDDIIDQVVRPTGLLDPLIEVRPVTTQVDDLLSEIRKRVAINERVLVTTLTKRMAEDLTEYLEEHGERVRYLHSDIDTVERVEIIRDLRLGEFDVLVGINLLREGLDMPEVSLVAILDADKEGFLRSERSLIQTIGRAARNLNGKAILYGDRITDSMARAISETERRRAKQQAFNEENGIVPQGLNKKVSDVLQLGKPGNRGKGRGKGKAAENVGQYKNLTPKALDQKIRELEAQMYTHAQNLEFELAAGLRDEIHQLREQFIAIS.

The Helicase ATP-binding domain maps to 26-183 (EGLEDGLAHQ…RRLAELQYAR (158 aa)). 39 to 46 (GVTGSGKT) lines the ATP pocket. The Beta-hairpin motif lies at 92-115 (YYDYYQPEAYVPSSDTFIEKDAAV). Positions 431–597 (QVDDLLSEIR…GLNKKVSDVL (167 aa)) constitute a Helicase C-terminal domain. One can recognise a UVR domain in the interval 630-665 (DQKIRELEAQMYTHAQNLEFELAAGLRDEIHQLREQ).

It belongs to the UvrB family. Forms a heterotetramer with UvrA during the search for lesions. Interacts with UvrC in an incision complex.

Its subcellular location is the cytoplasm. Its function is as follows. The UvrABC repair system catalyzes the recognition and processing of DNA lesions. A damage recognition complex composed of 2 UvrA and 2 UvrB subunits scans DNA for abnormalities. Upon binding of the UvrA(2)B(2) complex to a putative damaged site, the DNA wraps around one UvrB monomer. DNA wrap is dependent on ATP binding by UvrB and probably causes local melting of the DNA helix, facilitating insertion of UvrB beta-hairpin between the DNA strands. Then UvrB probes one DNA strand for the presence of a lesion. If a lesion is found the UvrA subunits dissociate and the UvrB-DNA preincision complex is formed. This complex is subsequently bound by UvrC and the second UvrB is released. If no lesion is found, the DNA wraps around the other UvrB subunit that will check the other stand for damage. This is UvrABC system protein B from Serratia proteamaculans (strain 568).